Consider the following 469-residue polypeptide: 3-isopropylmalate dehydratase large subunit (469 aa).

[4Fe-4S] cluster is bound by residues C348, C409, and C412.

This sequence belongs to the aconitase/IPM isomerase family. LeuC type 1 subfamily. In terms of assembly, heterodimer of LeuC and LeuD. [4Fe-4S] cluster is required as a cofactor.

The catalysed reaction is (2R,3S)-3-isopropylmalate = (2S)-2-isopropylmalate. The protein operates within amino-acid biosynthesis; L-leucine biosynthesis; L-leucine from 3-methyl-2-oxobutanoate: step 2/4. Catalyzes the isomerization between 2-isopropylmalate and 3-isopropylmalate, via the formation of 2-isopropylmaleate. The chain is 3-isopropylmalate dehydratase large subunit from Nitrosococcus oceani (strain ATCC 19707 / BCRC 17464 / JCM 30415 / NCIMB 11848 / C-107).